A 118-amino-acid polypeptide reads, in one-letter code: Putative pterin-4-alpha-carbinolamine dehydratase (118 aa).

The protein belongs to the pterin-4-alpha-carbinolamine dehydratase family.

It catalyses the reaction (4aS,6R)-4a-hydroxy-L-erythro-5,6,7,8-tetrahydrobiopterin = (6R)-L-erythro-6,7-dihydrobiopterin + H2O. The chain is Putative pterin-4-alpha-carbinolamine dehydratase from Pseudomonas entomophila (strain L48).